The primary structure comprises 296 residues: Large ribosomal subunit protein uL18B (296 aa).

A disordered region spans residues 251–296 (PVHEKKPKKEVKKKRWNRAKLSLEQKKDRVAQKKASFLRAQEKADS). Residues 255–268 (KKPKKEVKKKRWNR) show a composition bias toward basic residues. Residues 271–281 (LSLEQKKDRVA) are compositionally biased toward basic and acidic residues.

The protein belongs to the universal ribosomal protein uL18 family. As to quaternary structure, component of the large ribosomal subunit (LSU). Part of a LSU subcomplex, the 5S RNP which is composed of the 5S RNA, RPL5 and RPL11.

Its subcellular location is the cytoplasm. It is found in the nucleus. The protein resides in the nucleolus. Component of the ribosome, a large ribonucleoprotein complex responsible for the synthesis of proteins in the cell. The small ribosomal subunit (SSU) binds messenger RNAs (mRNAs) and translates the encoded message by selecting cognate aminoacyl-transfer RNA (tRNA) molecules. The large subunit (LSU) contains the ribosomal catalytic site termed the peptidyl transferase center (PTC), which catalyzes the formation of peptide bonds, thereby polymerizing the amino acids delivered by tRNAs into a polypeptide chain. The nascent polypeptides leave the ribosome through a tunnel in the LSU and interact with protein factors that function in enzymatic processing, targeting, and the membrane insertion of nascent chains at the exit of the ribosomal tunnel. As part of the 5S RNP/5S ribonucleoprotein particle it is an essential component of the LSU, required for its formation and the maturation of rRNAs. It also couples ribosome biogenesis to p53/TP53 activation. As part of the 5S RNP it accumulates in the nucleoplasm and inhibits MDM2, when ribosome biogenesis is perturbed, mediating the stabilization and the activation of TP53. The polypeptide is Large ribosomal subunit protein uL18B (rpl5-b) (Xenopus laevis (African clawed frog)).